The primary structure comprises 351 residues: Peptide chain release factor 1 (351 aa).

Q229 carries the N5-methylglutamine modification. Residues 279-300 form a disordered region; sequence ADAERAADRKSQVGSGDRSERI.

This sequence belongs to the prokaryotic/mitochondrial release factor family. In terms of processing, methylated by PrmC. Methylation increases the termination efficiency of RF1.

The protein resides in the cytoplasm. Peptide chain release factor 1 directs the termination of translation in response to the peptide chain termination codons UAG and UAA. This is Peptide chain release factor 1 from Paracoccus denitrificans (strain Pd 1222).